The chain runs to 121 residues: Small ribosomal subunit protein bS6 (121 aa).

This sequence belongs to the bacterial ribosomal protein bS6 family.

In terms of biological role, binds together with bS18 to 16S ribosomal RNA. The chain is Small ribosomal subunit protein bS6 from Pelagibacter ubique (strain HTCC1062).